Consider the following 974-residue polypeptide: Serine/threonine-protein kinase 10 (974 aa).

In terms of domain architecture, Protein kinase spans 37-295; sequence WEIIGELGDG…AAQLLEHPFV (259 aa). ATP contacts are provided by residues 43 to 51 and K66; that span reads LGDGAFGKV. The active-site Proton acceptor is the D158. The span at 320–332 shows a compositional bias: acidic residues; sequence EDNHEDGEDEDPA. The segment at 320 to 479 is disordered; that stretch reads EDNHEDGEDE…EKEDHCEETQ (160 aa). Over residues 343 to 353 the composition is skewed to polar residues; that stretch reads DPSQTSATSLN. Composition is skewed to basic and acidic residues over residues 382–406 and 458–477; these read PLKE…ESEA and TMEK…HCEE. Coiled coils occupy residues 605–729 and 870–950; these read QKEQ…EEQK and EKVK…EHLK.

Belongs to the protein kinase superfamily. STE Ser/Thr protein kinase family. STE20 subfamily. As to quaternary structure, homodimer. Autophosphorylates.

The protein localises to the cell membrane. It carries out the reaction L-seryl-[protein] + ATP = O-phospho-L-seryl-[protein] + ADP + H(+). It catalyses the reaction L-threonyl-[protein] + ATP = O-phospho-L-threonyl-[protein] + ADP + H(+). In terms of biological role, may act as a polo kinase kinase by mediating phosphorylation of plk1. The chain is Serine/threonine-protein kinase 10 (stk10) from Danio rerio (Zebrafish).